Consider the following 176-residue polypeptide: RNA pyrophosphohydrolase (176 aa).

The 144-residue stretch at 6–149 folds into the Nudix hydrolase domain; that stretch reads GYRPNVGIVI…KRDVYRRVMK (144 aa). The short motif at 38–59 is the Nudix box element; the sequence is GGINPGESAEQAMYRELFEEVG.

It belongs to the Nudix hydrolase family. RppH subfamily. The cofactor is a divalent metal cation.

Its function is as follows. Accelerates the degradation of transcripts by removing pyrophosphate from the 5'-end of triphosphorylated RNA, leading to a more labile monophosphorylated state that can stimulate subsequent ribonuclease cleavage. In Salmonella arizonae (strain ATCC BAA-731 / CDC346-86 / RSK2980), this protein is RNA pyrophosphohydrolase.